Consider the following 435-residue polypeptide: Solute carrier family 38 member 8 (435 aa).

11 consecutive transmembrane segments (helical) span residues 29-49, 55-75, 100-120, 151-171, 178-198, 218-240, 250-270, 295-315, 348-368, 374-394, and 410-430; these read AVFILMKSALGAGLLNFPWAF, VVPAFLVELVSLVFLISGLVI, IGKLCEACFLLNLLMISVAFL, FTLPLLSVLVILPLSAPREIA, ILGTLAACYLALVITVQYYLW, VFSVFPTICFGFQCHEAAVSIYC, WALVSVLSLLACCLIYSLTGV, IIVARVLFAVSIVTVYPIVLF, MPLTILWVTVTLAMALFMPDL, IIGGISSFFIFIFPGLCLICA, and VWGVVSVLVGTFIFGQSTAAA.

Belongs to the amino acid/polyamine transporter 2 family. Expressed in fetal and adult brain, and spinal cord. In the brain, it is localized in the cell body and axon of the majority of neuronal cells and in a subset of glial cells. Found throughout the neuronal retina, with higher expression levels in the inner and outer plexiform layers and the photoreceptor layer. Very weak expression is also present in the kidneys, thymus, and testes.

The protein resides in the membrane. Its subcellular location is the cytoplasm. It is found in the cell cortex. The protein localises to the cell projection. It localises to the axon. It catalyses the reaction L-glutamine(out) = L-glutamine(in). The enzyme catalyses L-alanine(in) = L-alanine(out). The catalysed reaction is L-histidine(out) = L-histidine(in). It carries out the reaction L-aspartate(out) = L-aspartate(in). It catalyses the reaction L-arginine(in) = L-arginine(out). The enzyme catalyses L-leucine(in) = L-leucine(out). Functionally, electrogenic sodium-dependent amino acid transporter with a preference for L-glutamine, L-alanine, L-histidine, L-aspartate and L-arginine. May facilitate glutamine uptake in both excitatory and inhibitory neurons. The transport mechanism and stoichiometry remain to be elucidated. The protein is Solute carrier family 38 member 8 of Homo sapiens (Human).